The following is a 210-amino-acid chain: Na(+)-translocating NADH-quinone reductase subunit D (210 aa).

The next 5 membrane-spanning stretches (helical) occupy residues 42–62 (FVMT…ISLI), 72–92 (IIAQ…VLKA), 103–123 (VFVG…AYAM), 131–151 (FLDG…VATV), and 178–198 (NGLL…IWGV).

It belongs to the NqrDE/RnfAE family. In terms of assembly, composed of six subunits; NqrA, NqrB, NqrC, NqrD, NqrE and NqrF.

The protein resides in the cell inner membrane. The enzyme catalyses a ubiquinone + n Na(+)(in) + NADH + H(+) = a ubiquinol + n Na(+)(out) + NAD(+). Functionally, NQR complex catalyzes the reduction of ubiquinone-1 to ubiquinol by two successive reactions, coupled with the transport of Na(+) ions from the cytoplasm to the periplasm. NqrA to NqrE are probably involved in the second step, the conversion of ubisemiquinone to ubiquinol. The polypeptide is Na(+)-translocating NADH-quinone reductase subunit D (Aeromonas salmonicida (strain A449)).